The chain runs to 178 residues: Small ribosomal subunit protein uS5 (178 aa).

Residues 15 to 78 enclose the S5 DRBM domain; that stretch reads FEEKIIEIRR…ADAKKNVIEV (64 aa).

It belongs to the universal ribosomal protein uS5 family. As to quaternary structure, part of the 30S ribosomal subunit. Contacts proteins S4 and S8.

In terms of biological role, with S4 and S12 plays an important role in translational accuracy. Located at the back of the 30S subunit body where it stabilizes the conformation of the head with respect to the body. In Thermotoga neapolitana (strain ATCC 49049 / DSM 4359 / NBRC 107923 / NS-E), this protein is Small ribosomal subunit protein uS5.